A 76-amino-acid chain; its full sequence is Putative membrane protein insertion efficiency factor (76 aa).

The protein belongs to the UPF0161 family.

The protein localises to the cell inner membrane. Functionally, could be involved in insertion of integral membrane proteins into the membrane. In Anaeromyxobacter dehalogenans (strain 2CP-C), this protein is Putative membrane protein insertion efficiency factor.